A 179-amino-acid polypeptide reads, in one-letter code: Small ribosomal subunit protein eS10x (179 aa).

Positions 90–179 are disordered; it reads TLKKSAKPGG…AAAPSGSGLP (90 aa). Residues 108–129 show a composition bias toward basic and acidic residues; it reads DRSRGPRHEGGDRPRFGDRDGY. Gly residues predominate over residues 134–144; it reads RAGGEFGGEKG. Low complexity predominate over residues 145-156; that stretch reads GAPADYQPSFQG. Residues 157–167 show a composition bias toward gly residues; that stretch reads SGRGFGRGAGG. Residues 168–179 are compositionally biased toward low complexity; that stretch reads YSAAAPSGSGLP.

Belongs to the eukaryotic ribosomal protein eS10 family.

Its subcellular location is the cytoplasm. In Arabidopsis thaliana (Mouse-ear cress), this protein is Small ribosomal subunit protein eS10x (RPS10C).